A 659-amino-acid polypeptide reads, in one-letter code: Mitochondrial Rho GTPase 1 (659 aa).

Residues 1-631 (MTKTRIRIVV…LTNDIDYRQT (631 aa)) lie on the Cytoplasmic side of the membrane. Positions 3–183 (KTRIRIVVCG…FYLCQRTITN (181 aa)) constitute a Miro 1 domain. GTP-binding positions include 12–19 (GDSGVGKT), 61–63 (DTG), and 115–118 (NKCD). EF-hand domains are found at residues 199–234 (LGVLALKRVFVLSDMDQDGFLNDDEITKLQKKCFSK) and 328–363 (LGYRFFVDTFLKYDKDNDGGLNNDELHLLFKTTPGL). Residues aspartate 212, aspartate 214, aspartate 216, glutamate 223, aspartate 341, aspartate 343, aspartate 345, and glutamate 352 each contribute to the Ca(2+) site. A Miro 2 domain is found at 444–609 (RKVLNCYMLG…FIKLTEVALE (166 aa)). GTP contacts are provided by residues 453 to 460 (GKGNSGKS), 489 to 493 (ELKGG), and 558 to 561 (LKAD). A helical; Anchor for type IV membrane protein transmembrane segment spans residues 632 to 652 (IVAISSVVGFASLFTFTALKI). Residues 653–659 (YSSFKNT) lie on the Mitochondrial intermembrane side of the membrane.

It belongs to the mitochondrial Rho GTPase family.

It is found in the mitochondrion outer membrane. Mitochondrial GTPase involved in mitochondrial trafficking. Probably involved in control of anterograde transport of mitochondria and their subcellular distribution. The chain is Mitochondrial Rho GTPase 1 (GEM1) from Kluyveromyces lactis (strain ATCC 8585 / CBS 2359 / DSM 70799 / NBRC 1267 / NRRL Y-1140 / WM37) (Yeast).